A 662-amino-acid polypeptide reads, in one-letter code: MVKYKILVATGDSVFAGSANLVHLWLVGEHGEADLGKQLRPLLGRKTELEVDVPLHLGRLLAVKLRKQKGLLDSDWFCKSITVQGPGTQGEAFFPCYSWVQGKETICLTEGTALKVTDDTQNLFRKYREQELENRRNVYRWGSWKEGLILPIAGSTERDLPRNQRFMKDKDLDFSLSLVKELKNFAIKGTLDFVSRVQKLEDYQKVFPHTKTALPERVRGSWKEDALFGYQFLNGANPMLLRRSMRLPARLVLPPGMEDVQTQLEKELKAGSLFEVDFSLLDGVKPNIIIFKQQYVTAPLVMLKLQPDGRLLPMVIQLQPPRHGCPPPLLFLPSDPPMAWLLAKIWVRSSDFQLHQLQSHLLRGHLMAEVISVATMRSLPSLHPIYKLLAPHFRYTMEINTLARNNLVSEWGIFDLVVSTGSGGHVDILQRATSCLTYRSFCPPDDLADRGLVGVKSSLYAQDALRLWEIISRYVERMVELFYRSDTDVKEDPELQVWCREVTEVGLLGAQDRGFPLSLESRAELCRFVAMCIFTCTGQHASTHLGQLDWYAWIPNGPCTMRKPPPISKDVTERDIVDSLPCLQQARMQITVTKFLGRRQPVMVALGQHKEEYFSGPRPRDVLKQFQEELAIMDKEIEVRNASLDLPYEYLRPSLVENSVTI.

One can recognise a PLAT domain in the interval 2–114 (VKYKILVATG…TICLTEGTAL (113 aa)). The Lipoxygenase domain occupies 115–662 (KVTDDTQNLF…PSLVENSVTI (548 aa)). The Fe cation site is built by H360, H365, H540, and I662.

This sequence belongs to the lipoxygenase family. Fe cation is required as a cofactor. Expressed in epidermis.

Its subcellular location is the cytoplasm. The catalysed reaction is (5Z,8Z,11Z,14Z)-eicosatetraenoate + O2 = (12S)-hydroperoxy-(5Z,8Z,10E,14Z)-eicosatetraenoate. It catalyses the reaction 1-O-methyl-(9Z,12Z)-octadecadienoate + O2 = 1-O-methyl-(13S)-hydroperoxy-(9Z,11E)-octadecadienoate. The enzyme catalyses (8Z,11Z,14Z)-eicosatrienoate + O2 = (12S)-hydroperoxy-(8Z,10E,14Z)-eicosatrienoate. It carries out the reaction (5Z,8Z,11Z)-eicosatrienoate + O2 = (12S)-hydroperoxy-(5Z,8Z,10E)-eicosatrienoate. The catalysed reaction is 1-O-methyl-(5Z,8Z,11Z,14Z)-eicosatetraenoate + O2 = 1-O-methyl-(12S)-hydroperoxy-(5Z,8Z,10E,14Z)-eicosatetraenoate. It catalyses the reaction (9Z,12Z)-octadecadienoate + O2 = (13S)-hydroperoxy-(9Z,11E)-octadecadienoate. The enzyme catalyses (4Z,7Z,10Z,13Z,16Z,19Z)-docosahexaenoate + O2 = (14S)-hydroperoxy-(4Z,7Z,10Z,12E,16Z,19Z)-docosahexaenoate. Its pathway is lipid metabolism; hydroperoxy eicosatetraenoic acid biosynthesis. Arachidonate 12-lipoxygenase activity is decreased when the pH decreases from 7.4 to 6.0. In terms of biological role, catalyzes the regio and stereo-specific incorporation of a single molecule of dioxygen into free and esterified polyunsaturated fatty acids generating lipid hydroperoxides that can be further reduced to the corresponding hydroxy species. Shows increasing catalytic activity within the series arachidonic acid &lt; 5,8,11-eicosatrienoic acid &lt; linoleic acid &lt; 8,11,14-eicosatrienoic acid. The sequence is that of Polyunsaturated fatty acid (12S)/(13S)-lipoxygenase, epidermal-type from Mus musculus (Mouse).